Reading from the N-terminus, the 334-residue chain is MKHFLRMLIQVCLYFYCKFLWRCLKFVMRKLTGRCELQRICYNTKPGASRTMKIETSLRDSKSKLLQTSVSVHPDAIEKTIEDIMELKKINPDVNPQLGISLQACLLQIVGYRNLIADVEKLRREAYDSDNPQHEEMLLKLWKFLKPNTPLESRISKQWCEIGFQGDDPKTDFRGMGLLGLYNLQYFAERDATAAQQVLSDSLHPKCRDITKEEISKFSKAEWEKKRMDKAIGYSFAIVGINITDLAYNLLVSGALKTHFYNIAPEAPTLSHFQQTFCYLMHEFHKFWIEEDPMDIMEFNRVREKFRKRIIKQLQNPDMALCPHFAASEGLINM.

The ELMO domain maps to 133–314 (QHEEMLLKLW…KFRKRIIKQL (182 aa)).

In terms of biological role, acts as a GTPase-activating protein (GAP) toward guanine nucleotide exchange factors like ARL2, ARL3, ARF1 and ARF6, but not for GTPases outside the Arf family. The polypeptide is ELMO domain-containing protein 1 (ELMOD1) (Homo sapiens (Human)).